Reading from the N-terminus, the 78-residue chain is MSDLFSSESPVTLAQARTVAAGYQNVFIENLQPAGHFQIVIRDHRDHDSQLVWRNWNYESGANDALNSYLQSHGLKAS.

It belongs to the UPF0401 family.

In Salmonella typhi, this protein is UPF0401 protein YubL (yubL).